Consider the following 94-residue polypeptide: Putative regulatory protein LEPBI_I0950 (94 aa).

This sequence belongs to the RemA family.

The protein is Putative regulatory protein LEPBI_I0950 of Leptospira biflexa serovar Patoc (strain Patoc 1 / ATCC 23582 / Paris).